We begin with the raw amino-acid sequence, 518 residues long: 4-trimethylaminobutyraldehyde dehydrogenase B (518 aa).

NAD(+) contacts are provided by residues Lys204 and 256–260; that span reads GSVPT. Residue Glu278 is the Proton acceptor of the active site. Cys312 (nucleophile) is an active-site residue. Glu415 is a binding site for NAD(+).

Belongs to the aldehyde dehydrogenase family. Homotetramer.

Its subcellular location is the cytoplasm. The protein localises to the cytosol. The enzyme catalyses 4-(trimethylamino)butanal + NAD(+) + H2O = 4-(trimethylamino)butanoate + NADH + 2 H(+). It carries out the reaction an aldehyde + NAD(+) + H2O = a carboxylate + NADH + 2 H(+). The protein operates within amine and polyamine biosynthesis; carnitine biosynthesis. In terms of biological role, converts gamma-trimethylaminobutyraldehyde into gamma-butyrobetaine with high efficiency (in vitro). Can catalyze the irreversible oxidation of a broad range of aldehydes to the corresponding acids in an NAD-dependent reaction, but with low efficiency. This is 4-trimethylaminobutyraldehyde dehydrogenase B (aldh9a1b) from Danio rerio (Zebrafish).